Here is a 545-residue protein sequence, read N- to C-terminus: High-affinity glucose transporter 1 (545 aa).

Helical transmembrane passes span 29–49 (VFFI…DISS), 72–92 (GFIT…SSFV), 100–120 (LSLL…SSVQ), 125–145 (LIIG…VAPV), 157–177 (GLIG…MFYL), 192–212 (IAWG…FFIP), 291–311 (LTGM…AGYS), 317–337 (VASS…LYFI), and 345–365 (LLIG…GILG). N-linked (GlcNAc...) asparagine glycans are attached at residues Asn-376 and Asn-387. Helical transmembrane passes span 395-415 (IACC…GIWV) and 433-453 (ISTS…PTGF). N-linked (GlcNAc...) asparagine glycosylation occurs at Asn-455. The helical transmembrane segment at 460 to 480 (TYIIYGVFCFAMATHVYFGFP) threads the bilayer. A disordered region spans residues 524 to 545 (VEHEEDKLMNEDSNSESRENQA).

It belongs to the major facilitator superfamily. Sugar transporter (TC 2.A.1.1) family. Interacts with the human complement factors FH and C4BP. Also binds human immunodeficiency virus (HIV) protein gp160.

The protein resides in the cell membrane. Functionally, high-affinity glucose transporter. Acts as a multifunctional complement-evasion molecule that causes down-regulation of complement activation by acquisition of human complement factors FH and C4BP. Also functions as a human immunodeficiency virus (HIV) receptor via binding the viral gp160 protein. Modulates hyphae formation. This Candida albicans (strain SC5314 / ATCC MYA-2876) (Yeast) protein is High-affinity glucose transporter 1.